The following is a 128-amino-acid chain: Gas vesicle protein O (128 aa).

Positions 1–49 (MANTPEDTQNTQNDSQNDSQNDSQKDTSARATSARAHQQPQEQPPSPMR) are disordered. Residues 7 to 22 (DTQNTQNDSQNDSQND) are compositionally biased toward low complexity. Polar residues predominate over residues 29 to 41 (ARATSARAHQQPQ).

The protein belongs to the gas vesicle GvpO family.

The protein localises to the gas vesicle. A minor component of the gas vesicle. May play a role in transcription and/or RNA stability and in GV assembly. Gas vesicles are hollow, gas filled proteinaceous nanostructures found in some microorganisms. It is not clear what function gas vesicles perform in soil bacteria. This chain is Gas vesicle protein O, found in Streptomyces sp. (strain CB03234).